The sequence spans 522 residues: Cytochrome P450 714C2 (522 aa).

At 1–11 (MELFSSQQWLA) the chain is on the lumenal side. A helical; Signal-anchor for type III membrane protein membrane pass occupies residues 12 to 32 (LLPPIILCILLFSYVYIILWL). The Cytoplasmic segment spans residues 33–522 (RPERLRQKLR…KGVPLIFREL (490 aa)). Cys470 contributes to the heme binding site.

Belongs to the cytochrome P450 family. Requires heme as cofactor.

Its subcellular location is the membrane. In terms of biological role, probably not involved in gibberellin metabolism since over-expression of CYP714C2 in a heterologous system does not induce semi-dwarfism. The protein is Cytochrome P450 714C2 (CYP714C2) of Oryza sativa subsp. japonica (Rice).